A 353-amino-acid chain; its full sequence is Ferredoxin--NADP reductase (353 aa).

Threonine 25, glutamate 44, glutamine 52, tyrosine 57, valine 97, phenylalanine 132, aspartate 298, and serine 339 together coordinate FAD.

It belongs to the ferredoxin--NADP reductase type 2 family. Homodimer. The cofactor is FAD.

It catalyses the reaction 2 reduced [2Fe-2S]-[ferredoxin] + NADP(+) + H(+) = 2 oxidized [2Fe-2S]-[ferredoxin] + NADPH. The protein is Ferredoxin--NADP reductase of Chlorobium chlorochromatii (strain CaD3).